The chain runs to 111 residues: Nucleoid-associated protein Cphamn1_1179 (111 aa).

The protein belongs to the YbaB/EbfC family. In terms of assembly, homodimer.

The protein resides in the cytoplasm. It is found in the nucleoid. Functionally, binds to DNA and alters its conformation. May be involved in regulation of gene expression, nucleoid organization and DNA protection. The sequence is that of Nucleoid-associated protein Cphamn1_1179 from Chlorobium phaeobacteroides (strain BS1).